A 628-amino-acid polypeptide reads, in one-letter code: MKLSWKTLLLWSLPIFVIGFFFWQGFLGPTTTDVGSNIASSRMTYGRFLEYLDMGWVKRVDLYENNHTAIVEAVGPELGNRVQRIRVELPASAPELITKLRKANVDLDAHPPKSTSAVWGLLGNLLFPLLLVGGLAFLFRRSNNASGGPGQAMSFGKSKALFQMEAKTGVVFNDVAGVEEAKEEFQEVVTFLKQPESFTAVGAKIPKGVLLVGPPGTGKTLLAKAIAGEASVPFFSISGSEFVEMFVGVGASRVRDLFKKAKDNAPCIVFIDEIDAVGRQRGTGVGGGNDEREQTLNQLLTEMDGFEGNTGVIVIAATNRADILDSALLRPGRFDRQVSVDVPDFKGRLAILEVHAKNKKMEPKVSLETIARRTPGFSGADLANLLNEAAILTARRRKNAMTMSEIDTSIDRVVAGMEGTPLIDSKSKRLIAYHEVGHAIIGSLLEHHDPVQKVTLIPRGQARGLTWFTPSDDQSLISRSQILARIVGALGGRAAEEIIFGDAEVTTGASNDLQQVTSMARQMVTRFGMSKIGPLSLESQGGDPFLGRGMGGGSEYSDEVATNIDKQVREIVSECYAQAKHIIIDNRVVIDRLVDLLIEKETIEGNEFRDIVKEYTAIPEKNYYISQF.

The Stromal portion of the chain corresponds to 1 to 7 (MKLSWKT). Residues 8-28 (LLLWSLPIFVIGFFFWQGFLG) traverse the membrane as a helical segment. Residues 29 to 118 (PTTTDVGSNI…AHPPKSTSAV (90 aa)) lie on the Lumenal side of the membrane. The helical transmembrane segment at 119–139 (WGLLGNLLFPLLLVGGLAFLF) threads the bilayer. The Stromal segment spans residues 140-628 (RRSNNASGGP…PEKNYYISQF (489 aa)). 213–220 (GPPGTGKT) provides a ligand contact to ATP. His434 contributes to the Zn(2+) binding site. Residue Glu435 is part of the active site. Zn(2+) contacts are provided by His438 and Asp512.

This sequence in the central section; belongs to the AAA ATPase family. It in the C-terminal section; belongs to the peptidase M41 family. Homohexamer. Zn(2+) is required as a cofactor.

The protein resides in the plastid. Its subcellular location is the chloroplast thylakoid membrane. Functionally, acts as a processive, ATP-dependent zinc metallopeptidase. This chain is ATP-dependent zinc metalloprotease FtsH, found in Pyropia yezoensis (Susabi-nori).